A 462-amino-acid polypeptide reads, in one-letter code: MSYFPRTYAHLMRNVLAHNKGNIYLQIGTQLHDTQIKIRFNGVRYISRNHGGKQQHINTAPIEFTPNFGYGDRTSNCNKKVESTAMKTLRCTDDISTSSGSEATTDASTQLPFNVKLVDPMVRKSKRPSHAISEGLNMKTLKKKVIMPYLQLTKPRLTILVMLSAICSYALSPYPASVNELLCLTVGTTLCSGSANAINMGREPEFDRQMVRTQARPVVRGDVTPTQAFEFAALIGTLGVSILYFGVNPTVAILGASNIALYGWAYTSMKRKHIINTWLGALVGMVPPLMGWAAASPLSHPGSWCLAGLLFAWQFPHFNTLSHNIRNEYKNAGYVMTAWKNPLLNARVSLRYSILMFPLCFGLSYFNITDWYYQIDSGLINAWLTFWAFKFYWQQRINYSAKTLKDNVKFNKGLSVANIYARKTFMASVLHLPAILILAIIHKKGRWDWIYPGEAKRPQERF.

Residues 1–30 constitute a mitochondrion transit peptide; the sequence is MSYFPRTYAHLMRNVLAHNKGNIYLQIGTQ. 7 helical membrane-spanning segments follow: residues 158–178, 234–254, 274–294, 298–318, 352–372, 373–393, and 425–445; these read TILV…PASV, LIGT…VAIL, IINT…GWAA, LSHP…FPHF, YSIL…TDWY, YQID…KFYW, and FMAS…HKKG.

It belongs to the UbiA prenyltransferase family. In terms of assembly, forms ~370 kDa homooligomeric complexes.

It localises to the mitochondrion. The protein localises to the mitochondrion membrane. The catalysed reaction is heme b + (2E,6E)-farnesyl diphosphate + H2O = Fe(II)-heme o + diphosphate. Its pathway is porphyrin-containing compound metabolism; heme O biosynthesis; heme O from protoheme: step 1/1. Positively regulated by the hydroxylated intermediate (heme I) formed at the subsequent step, or by HAS/COX15 itself. Its function is as follows. Catalyzes the first reaction in the biosynthesis of heme A, a prosthetic group of mitochondrial cytochrome c oxidase (CcO). Heme A is synthesized from heme B by two sequential enzymatic reactions catalyzed by heme O synthase (HOS/COX10) and heme A synthase (HAS/COX15). HOS converts heme B (protoheme IX) to heme O by substitution of the vinyl group on carbon 2 of heme B porphyrin ring with a hydroxyethyl farnesyl side group. This chain is Protoheme IX farnesyltransferase, mitochondrial (COX10), found in Saccharomyces cerevisiae (strain ATCC 204508 / S288c) (Baker's yeast).